Here is a 3258-residue protein sequence, read N- to C-terminus: Protein unc-80 homolog (3258 aa).

A disordered region spans residues 152–173 (VENQGSPGQPCQSSSNDEEENN). Residues 155-166 (QGSPGQPCQSSS) are compositionally biased toward low complexity. S257 carries the post-translational modification Phosphoserine. Disordered regions lie at residues 291 to 316 (RGNS…RASL), 449 to 468 (RKED…GKRR), 522 to 560 (RRGS…HGEN), 697 to 717 (KKSE…GAFQ), 732 to 784 (PAVS…TPVS), 963 to 1019 (PGKK…EQMQ), 1034 to 1076 (KSQS…ISLR), 1404 to 1447 (EDSK…MSNA), and 1817 to 1836 (AVSA…HHVP). The span at 295–307 (FDGSLSSQTSQER) shows a compositional bias: polar residues. At S525 the chain carries Phosphoserine. Over residues 698–712 (KSENKENETLEKRPS) the composition is skewed to basic and acidic residues. Gly residues predominate over residues 732-767 (PAVSGAGDGGGEEGGGGDGGGGGGDGGGGGGGGGGP). Basic and acidic residues-rich tracts occupy residues 769–780 (EKNDKNQEKDES) and 965–974 (KKVEENEQES). Low complexity predominate over residues 1035-1052 (SQSAASDTSSQSEQDTSE). Positions 1066–1076 (ARSRSRRISLR) are enriched in basic residues. The segment covering 1417–1429 (LKSDAGVEEKKEG) has biased composition (basic and acidic residues). The next 4 membrane-spanning stretches (helical) occupy residues 2268 to 2288 (PFVL…DAAN), 2398 to 2418 (IAAT…VEVL), 2785 to 2805 (GLAE…LVCF), and 2831 to 2851 (LALW…FVLL). A compositionally biased stretch (polar residues) spans 2942–2964 (NTGTGTVWEQDSEPSQQASQDTL). The tract at residues 2942–2982 (NTGTGTVWEQDSEPSQQASQDTLSRTDEEDEENDSISMPSV) is disordered. Position 3042 is a phosphoserine (S3042). The segment at 3051–3213 (NLLVQQPLGR…DDFTGLETSS (163 aa)) is disordered. Basic residues predominate over residues 3059–3068 (GRKRGLRQLR). Polar residues predominate over residues 3088–3100 (RLSTTRRSIQPKT). The span at 3117-3129 (PEPAAAPTDALPA) shows a compositional bias: low complexity. Residues 3175–3186 (PTEEGEKEEDTE) show a composition bias toward acidic residues.

It belongs to the unc-80 family. As to quaternary structure, NALCN complex consists of NALCN and auxiliary subunits, UNC79, UNC80 and NACL1. These auxiliary subunits are essential for the NALCN complex function. Interacts (via N-terminus half) with NALCN; this interaction facilitates NALCN surface localization. Interacts with UNC79. UNC80 bridges NALCN to UNC79. Post-translationally, phosphorylated on tyrosine residues. Moderately expressed in fetal brain, spinal cord, skeletal muscle, thymus, spleen, fetal liver, small intestine, colon, kidney and uterus. Highly expressed in adrenal gland, prostate and testis, as well as in brain and cerebellum.

The protein resides in the cell membrane. In terms of biological role, auxiliary subunit of the NALCN sodium channel complex, a voltage-gated ion channel responsible for the resting Na(+) permeability that controls neuronal excitability. Activated by neuropeptides substance P, neurotensin, and extracellular Ca(2+) that regulates neuronal excitability by controlling the sizes of NALCN-dependent sodium-leak current. UNC80 is essential for NALCN sensitivity to extracellular Ca(2+). This is Protein unc-80 homolog from Homo sapiens (Human).